Here is a 155-residue protein sequence, read N- to C-terminus: MSKKGGYKRTGVDVRYGDESVARFINAVMLDGKKDVATKIVYDAFAIIGEKMTEETPLEVYHRAMSNIAPVVEVRSKRVGGATYQIPMEVKPSRRGALAFRWLKQYATKRGGRSMAEKLAAELMDAAGEQGASVKKRDEVHRMADANKAFAHFRF.

Belongs to the universal ribosomal protein uS7 family. Part of the 30S ribosomal subunit. Contacts proteins S9 and S11.

One of the primary rRNA binding proteins, it binds directly to 16S rRNA where it nucleates assembly of the head domain of the 30S subunit. Is located at the subunit interface close to the decoding center, probably blocks exit of the E-site tRNA. The sequence is that of Small ribosomal subunit protein uS7 from Chlorobium phaeovibrioides (strain DSM 265 / 1930) (Prosthecochloris vibrioformis (strain DSM 265)).